Consider the following 571-residue polypeptide: Proline--tRNA ligase (571 aa).

Belongs to the class-II aminoacyl-tRNA synthetase family. ProS type 1 subfamily. As to quaternary structure, homodimer.

It localises to the cytoplasm. The catalysed reaction is tRNA(Pro) + L-proline + ATP = L-prolyl-tRNA(Pro) + AMP + diphosphate. In terms of biological role, catalyzes the attachment of proline to tRNA(Pro) in a two-step reaction: proline is first activated by ATP to form Pro-AMP and then transferred to the acceptor end of tRNA(Pro). As ProRS can inadvertently accommodate and process non-cognate amino acids such as alanine and cysteine, to avoid such errors it has two additional distinct editing activities against alanine. One activity is designated as 'pretransfer' editing and involves the tRNA(Pro)-independent hydrolysis of activated Ala-AMP. The other activity is designated 'posttransfer' editing and involves deacylation of mischarged Ala-tRNA(Pro). The misacylated Cys-tRNA(Pro) is not edited by ProRS. The polypeptide is Proline--tRNA ligase (Pseudomonas fluorescens (strain ATCC BAA-477 / NRRL B-23932 / Pf-5)).